Reading from the N-terminus, the 160-residue chain is G-protein-signaling modulator 3 (160 aa).

The tract at residues 1-55 (MEAERPQEEEDGEQGPPQDEEGWPPPNSTTRPWRSAPPSPPPPGTRHTALGPRSA) is disordered. Residues 7–22 (QEEEDGEQGPPQDEEG) are compositionally biased toward acidic residues. A phosphoserine mark is found at serine 35, serine 39, serine 56, and serine 59. Over residues 35 to 44 (SAPPSPPPPG) the composition is skewed to pro residues. Threonine 62 bears the Phosphothreonine mark. 3 consecutive GoLoco domains span residues 62-84 (TELL…RATF), 104-126 (REQL…RSEP), and 132-155 (GQEL…RSRP).

Expressed in heart, placenta, lung and liver.

Its subcellular location is the cytoplasm. Functionally, interacts with subunit of G(i) alpha proteins and regulates the activation of G(i) alpha proteins. The chain is G-protein-signaling modulator 3 (GPSM3) from Homo sapiens (Human).